A 69-amino-acid polypeptide reads, in one-letter code: Putative membrane protein insertion efficiency factor (69 aa).

This sequence belongs to the UPF0161 family.

The protein resides in the cell membrane. Functionally, could be involved in insertion of integral membrane proteins into the membrane. This chain is Putative membrane protein insertion efficiency factor, found in Clostridium botulinum (strain Okra / Type B1).